The sequence spans 166 residues: UPF0336 protein ML1908 (166 aa).

This sequence belongs to the UPF0336 family.

This chain is UPF0336 protein ML1908, found in Mycobacterium leprae (strain TN).